The sequence spans 198 residues: Probable GTP-binding protein EngB (198 aa).

Residues 21–195 (NFSEVAFLGR…EDIIINQTLG (175 aa)) enclose the EngB-type G domain. GTP is bound by residues 29–36 (GRSNVGKS), 56–60 (GKTQL), 81–84 (DLPG), 151–154 (TKCD), and 174–176 (VSN). Positions 36 and 58 each coordinate Mg(2+).

This sequence belongs to the TRAFAC class TrmE-Era-EngA-EngB-Septin-like GTPase superfamily. EngB GTPase family. It depends on Mg(2+) as a cofactor.

Its function is as follows. Necessary for normal cell division and for the maintenance of normal septation. This Campylobacter jejuni (strain RM1221) protein is Probable GTP-binding protein EngB.